The primary structure comprises 395 residues: Phosphoglycerate kinase (395 aa).

Substrate-binding positions include 22–24, Arg-37, 60–63, Arg-116, and Arg-149; these read DLN and HFGR. Residues Lys-199, Glu-322, and 352–355 each bind ATP; that span reads GGDT.

The protein belongs to the phosphoglycerate kinase family. As to quaternary structure, monomer.

It is found in the cytoplasm. It carries out the reaction (2R)-3-phosphoglycerate + ATP = (2R)-3-phospho-glyceroyl phosphate + ADP. It participates in carbohydrate degradation; glycolysis; pyruvate from D-glyceraldehyde 3-phosphate: step 2/5. The polypeptide is Phosphoglycerate kinase (Novosphingobium aromaticivorans (strain ATCC 700278 / DSM 12444 / CCUG 56034 / CIP 105152 / NBRC 16084 / F199)).